The chain runs to 1092 residues: Leukemia inhibitory factor receptor (1092 aa).

A signal peptide spans 1 to 43; the sequence is MAAYSWWRQPSWMVDNKRSRMTPNLPWLLSALTLLHLTMHANG. Residues 44–828 lie on the Extracellular side of the membrane; sequence LKRGVQDLKC…SMFVVTKENS (785 aa). In terms of domain architecture, Fibronectin type-III 1 spans 45–126; it reads KRGVQDLKCT…QSKFTLNEKD (82 aa). Intrachain disulfides connect Cys-53–Cys-63 and Cys-80–Cys-88. N-linked (GlcNAc...) asparagine glycosylation is found at Asn-164, Asn-199, Asn-238, and Asn-261. 2 disulfide bridges follow: Cys-208/Cys-265 and Cys-336/Cys-346. Fibronectin type-III domains are found at residues 330-429, 430-529, 533-624, 622-714, and 719-828; these read VPQK…VAPH, DPTS…TEAT, GPDT…IPND, PNDD…IGYV, and PIVA…KENS. 6 N-linked (GlcNAc...) asparagine glycosylation sites follow: Asn-385, Asn-402, Asn-421, Asn-440, Asn-453, and Asn-476. An intrachain disulfide couples Cys-461 to Cys-506. The short motif at 514–518 is the WSXWS motif element; the sequence is WSRWS. Residues Asn-567, Asn-647, Asn-658, Asn-675, Asn-724, and Asn-782 are each glycosylated (N-linked (GlcNAc...) asparagine). The helical transmembrane segment at 829 to 853 threads the bilayer; sequence VGLIIAILIPVAVAVIVGVVTSILC. Topologically, residues 854 to 1092 are cytoplasmic; that stretch reads YRKREWIKET…TNFFQNKPND (239 aa). The Box 1 motif signature appears at 864-872; it reads FYPDIPNPE. Residues Ser-922 and Ser-1039 each carry the phosphoserine modification. The disordered stretch occupies residues 1009-1092; it reads EDTAAEDEEG…TNFFQNKPND (84 aa). Polar residues-rich tracts occupy residues 1027 to 1062 and 1081 to 1092; these read ANVN…NSRQ and SFTNFFQNKPND.

It belongs to the type I cytokine receptor family. Type 2 subfamily. As to quaternary structure, heterodimer composed of LIFR and IL6ST. The heterodimer formed by LIFR and IL6ST interacts with the complex formed by CNTF and CNTFR. As to expression, placenta, liver, kidney, heart, lung, brain, and embryos. The liver may be the primary site of synthesis of the secreted form.

It is found in the cell membrane. The protein localises to the secreted. In terms of biological role, signal-transducing molecule. May have a common pathway with IL6ST. The soluble form inhibits the biological activity of LIF by blocking its binding to receptors on target cells. The chain is Leukemia inhibitory factor receptor (Lifr) from Mus musculus (Mouse).